The primary structure comprises 688 residues: Potassium-transporting ATPase ATP-binding subunit (688 aa).

Transmembrane regions (helical) follow at residues P34 to L54, A62 to A82, V219 to L239, and V260 to I280. D313 acts as the 4-aspartylphosphate intermediate in catalysis. Residues D350, E354, F383–S390, and K401 each bind ATP. Mg(2+) contacts are provided by D524 and D528. The next 3 membrane-spanning stretches (helical) occupy residues F594–M614, A622–L642, and I662–L682.

It belongs to the cation transport ATPase (P-type) (TC 3.A.3) family. Type IA subfamily. In terms of assembly, the system is composed of three essential subunits: KdpA, KdpB and KdpC.

Its subcellular location is the cell inner membrane. The enzyme catalyses K(+)(out) + ATP + H2O = K(+)(in) + ADP + phosphate + H(+). Its function is as follows. Part of the high-affinity ATP-driven potassium transport (or Kdp) system, which catalyzes the hydrolysis of ATP coupled with the electrogenic transport of potassium into the cytoplasm. This subunit is responsible for energy coupling to the transport system and for the release of the potassium ions to the cytoplasm. This Yersinia pestis bv. Antiqua (strain Antiqua) protein is Potassium-transporting ATPase ATP-binding subunit.